We begin with the raw amino-acid sequence, 527 residues long: MAAETASGSNRSISNSPLIENSDSNQILVPEKKSWKNFFSYLGPGFLVSIAYIDPGNFETDLQSGAQYKYELLWIILVASCAALVIQSLAANLGVVTGKHLAEHCRAEYSKVPNFMLWVVAEIAVVACDIPEVIGTAFALNMLFNIPVWIGVLLTGLSTLILLALQQYGIRKLEFLIAFLVFTIALCFFVELHYSKPDPKEVLYGLFVPQLKGNGATGLAISLLGAMVMPHNLFLHSALVLSRKIPRSVTGIKEACRYYLIESGLALMVAFLINVSVISVSGAVCNASDLSPEDRASCQDLDLNKASFLLRNVVGKWSSKLFAIALLASGQSSTITGTYAGQYVMQGFLDLRLEPWLRNFLTRCLAIIPSLIVALIGGSAGAGKLIIIASMILSFELPFALVPLLKFTSSKTKMGSHANSLVISSVTWIIGGLIMGINIYYLVSSFIKLLLHSHMNLVAIVFLGVLGFSGIATYLAAISYLVLRKNRESSSTHFLDFSNSQTEETLPREDIANMQLPNRVAVIGDLN.

12 helical membrane-spanning segments follow: residues 38-58, 71-91, 115-135, 143-163, 173-193, 221-241, 264-284, 321-341, 364-384, 385-405, 427-447, and 458-478; these read FFSYLGPGFLVSIAYIDPGNF, ELLWIILVASCAALVIQSLAA, FMLWVVAEIAVVACDIPEVIG, LFNIPVWIGVLLTGLSTLILL, LEFLIAFLVFTIALCFFVELH, ISLLGAMVMPHNLFLHSALVL, GLALMVAFLINVSVISVSGAV, LFAIALLASGQSSTITGTYAG, CLAIIPSLIVALIGGSAGAGK, LIIIASMILSFELPFALVPLL, TWIIGGLIMGINIYYLVSSFI, and VAIVFLGVLGFSGIATYLAAI.

This sequence belongs to the NRAMP (TC 2.A.55) family. Expressed in the vascular bundles of shoots, cotyledons, young leaves, sepals and petals, at the top of the flower stem and in the style. Expressed in the peduncle of developing siliques as well as in the septum and the funiculi.

Its subcellular location is the endomembrane system. Functionally, probable intracellular cadmium (Cd) transporter that participates in the distribution or availability of Cd within the cell. In Arabidopsis thaliana (Mouse-ear cress), this protein is Metal transporter Nramp6 (NRAMP6).